The following is an 879-amino-acid chain: Alanine--tRNA ligase (879 aa).

4 residues coordinate Zn(2+): His-566, His-570, Cys-668, and His-672.

This sequence belongs to the class-II aminoacyl-tRNA synthetase family. Requires Zn(2+) as cofactor.

The protein resides in the cytoplasm. It carries out the reaction tRNA(Ala) + L-alanine + ATP = L-alanyl-tRNA(Ala) + AMP + diphosphate. In terms of biological role, catalyzes the attachment of alanine to tRNA(Ala) in a two-step reaction: alanine is first activated by ATP to form Ala-AMP and then transferred to the acceptor end of tRNA(Ala). Also edits incorrectly charged Ser-tRNA(Ala) and Gly-tRNA(Ala) via its editing domain. The protein is Alanine--tRNA ligase of Clostridium beijerinckii (strain ATCC 51743 / NCIMB 8052) (Clostridium acetobutylicum).